The following is an 81-amino-acid chain: U1-sicaritoxin-Li1c (81 aa).

Residues 1 to 16 (ARGDAEKWESLISEER) constitute a propeptide that is removed on maturation. Disulfide bonds link C18–C35, C26–C40, C34–C53, and C42–C51. R62 is subject to Arginine amide. The propeptide occupies 66-81 (ALMLDPETHRLLFSED).

The protein belongs to the neurotoxin 28 (Litx) family. Expressed by the venom gland.

It is found in the secreted. Its function is as follows. Toxin active against insects (S.frugiperda larvae). May act on sodium (Nav) or calcium (Cav) channels. In Loxosceles intermedia (Brown spider), this protein is U1-sicaritoxin-Li1c.